We begin with the raw amino-acid sequence, 172 residues long: Cytochrome c oxidase subunit 4 isoform 2, mitochondrial (172 aa).

Residues 1 to 18 constitute a mitochondrion transit peptide; it reads MFSRATRSLVMKTGGLRT. The tract at residues 1–33 is disordered; the sequence is MFSRATRSLVMKTGGLRTQGTHSPGSAASSSQR. The span at 16–33 shows a compositional bias: polar residues; the sequence is LRTQGTHSPGSAASSSQR. Residues 19–101 are Mitochondrial matrix-facing; that stretch reads QGTHSPGSAA…TFAEMNHRSN (83 aa). The helical transmembrane segment at 102 to 127 threads the bilayer; that stretch reads EWKTVMGCVFFFIGFTALVIWWQRVY. Residues 128–172 lie on the Mitochondrial intermembrane side of the membrane; it reads VFPKKVVTLTEERKAQQLQRLLDMKSNPIQGLSAHWDYEKKEWKK.

It belongs to the cytochrome c oxidase IV family. As to quaternary structure, component of the cytochrome c oxidase (complex IV, CIV), a multisubunit enzyme composed of 14 subunits. The complex is composed of a catalytic core of 3 subunits MT-CO1, MT-CO2 and MT-CO3, encoded in the mitochondrial DNA, and 11 supernumerary subunits COX4I, COX5A, COX5B, COX6A, COX6B, COX6C, COX7A, COX7B, COX7C, COX8 and NDUFA4, which are encoded in the nuclear genome. The complex exists as a monomer or a dimer and forms supercomplexes (SCs) in the inner mitochondrial membrane with NADH-ubiquinone oxidoreductase (complex I, CI) and ubiquinol-cytochrome c oxidoreductase (cytochrome b-c1 complex, complex III, CIII), resulting in different assemblies (supercomplex SCI(1)III(2)IV(1) and megacomplex MCI(2)III(2)IV(2)). As to expression, highly expressed in lung.

The protein resides in the mitochondrion inner membrane. Its pathway is energy metabolism; oxidative phosphorylation. Functionally, component of the cytochrome c oxidase, the last enzyme in the mitochondrial electron transport chain which drives oxidative phosphorylation. The respiratory chain contains 3 multisubunit complexes succinate dehydrogenase (complex II, CII), ubiquinol-cytochrome c oxidoreductase (cytochrome b-c1 complex, complex III, CIII) and cytochrome c oxidase (complex IV, CIV), that cooperate to transfer electrons derived from NADH and succinate to molecular oxygen, creating an electrochemical gradient over the inner membrane that drives transmembrane transport and the ATP synthase. Cytochrome c oxidase is the component of the respiratory chain that catalyzes the reduction of oxygen to water. Electrons originating from reduced cytochrome c in the intermembrane space (IMS) are transferred via the dinuclear copper A center (CU(A)) of subunit 2 and heme A of subunit 1 to the active site in subunit 1, a binuclear center (BNC) formed by heme A3 and copper B (CU(B)). The BNC reduces molecular oxygen to 2 water molecules using 4 electrons from cytochrome c in the IMS and 4 protons from the mitochondrial matrix. This Rattus norvegicus (Rat) protein is Cytochrome c oxidase subunit 4 isoform 2, mitochondrial (Cox4i2).